The primary structure comprises 420 residues: NEDD8-specific protease 1 (420 aa).

Positions 257–281 (KSSDSSETSHESSNSNLKKSSESGS) are enriched in low complexity. The interval 257–420 (KSSDSSETSH…EELVSGDFPF (164 aa)) is disordered. A compositionally biased stretch (basic and acidic residues) spans 286–296 (NNHESDKDLHH). The segment covering 297 to 310 (EGHHHHHHHHHHHH) has biased composition (basic residues). Basic and acidic residues predominate over residues 311–324 (SHDDDPSSPAEKKQ). Serine 329, serine 340, and serine 351 each carry phosphoserine. Residues 355 to 377 (NKEDHLPLLSDEKLDKSAIDKIE) are compositionally biased toward basic and acidic residues.

This sequence belongs to the peptidase C48 family. Interacts with csn1. It is, however, not a component of the signalosome.

Its subcellular location is the cytoplasm. Protease that catalyzes two essential functions in the NEDD8 pathway: processing of full-length NEDD8 to its mature form and deconjugation of NEDD8 from targeted proteins such as the pcu1, pcu2 and pcu4 cullins and other proteins. In Schizosaccharomyces pombe (strain 972 / ATCC 24843) (Fission yeast), this protein is NEDD8-specific protease 1 (nep1).